The primary structure comprises 180 residues: Large ribosomal subunit protein uL5 (180 aa).

It belongs to the universal ribosomal protein uL5 family. In terms of assembly, part of the 50S ribosomal subunit; part of the 5S rRNA/L5/L18/L25 subcomplex. Contacts the 5S rRNA and the P site tRNA. Forms a bridge to the 30S subunit in the 70S ribosome.

In terms of biological role, this is one of the proteins that bind and probably mediate the attachment of the 5S RNA into the large ribosomal subunit, where it forms part of the central protuberance. In the 70S ribosome it contacts protein S13 of the 30S subunit (bridge B1b), connecting the 2 subunits; this bridge is implicated in subunit movement. Contacts the P site tRNA; the 5S rRNA and some of its associated proteins might help stabilize positioning of ribosome-bound tRNAs. The sequence is that of Large ribosomal subunit protein uL5 from Streptococcus thermophilus (strain CNRZ 1066).